The following is a 109-amino-acid chain: MKIKIYIYILLACYIASFLRLFINNNFIVSIIGSLLFGFFIDKRLSYSIEKIILSGFFSCFTSFSGFIYFLYKVFNQGDLMKFIIFCNLIIIINLLVMYFGFWISRKIT.

3 consecutive transmembrane segments (helical) span residues 21-41 (LFINNNFIVSIIGSLLFGFFI), 52-72 (IILSGFFSCFTSFSGFIYFLY), and 84-104 (IIFCNLIIIINLLVMYFGFWI).

Belongs to the fluoride channel Fluc/FEX (TC 1.A.43) family.

It is found in the cell inner membrane. The catalysed reaction is fluoride(in) = fluoride(out). In terms of biological role, fluoride-specific ion channel. Important for reducing fluoride concentration in the cell, thus reducing its toxicity. The protein is Fluoride-specific ion channel FluC 1 of Prochlorococcus marinus (strain MIT 9312).